Here is a 117-residue protein sequence, read N- to C-terminus: Probable non-functional immunoglobulin heavy variable 7-81 (117 aa).

Residues 1–19 form the signal peptide; the sequence is MDWTWSILFLVAAATGTYS. The framework-1 stretch occupies residues 20-44; sequence QVQLVQSGHEVKQPGASVKVSCKAS. One can recognise an Ig-like domain in the interval 20–117; sequence QVQLVQSGHE…EDMAMYYCAR (98 aa). An intrachain disulfide couples Cys41 to Cys115. A complementarity-determining-1 region spans residues 45–52; it reads GYSFTTYG. Residues 53–69 form a framework-2 region; sequence MNWVPQAPGQGLEWMGW. Positions 70 to 77 are complementarity-determining-2; it reads FNTYTGNP. N-linked (GlcNAc...) asparagine glycosylation is present at Asn76. The interval 78–115 is framework-3; it reads TYAQGFTGRFVFSMDTSASTAYLQISSLKAEDMAMYYC. A complementarity-determining-3 region spans residues 116 to 117; sequence AR.

In terms of assembly, immunoglobulins are composed of two identical heavy chains and two identical light chains; disulfide-linked.

Its subcellular location is the secreted. It is found in the cell membrane. Functionally, probable non-functional open reading frame (ORF) of V region of the variable domain of immunoglobulin heavy chains. Non-functional ORF generally cannot participate in the synthesis of a productive immunoglobulin chain due to altered V-(D)-J or switch recombination and/or splicing site (at mRNA level) and/or conserved amino acid change (protein level). Immunoglobulins, also known as antibodies, are membrane-bound or secreted glycoproteins produced by B lymphocytes. In the recognition phase of humoral immunity, the membrane-bound immunoglobulins serve as receptors which, upon binding of a specific antigen, trigger the clonal expansion and differentiation of B lymphocytes into immunoglobulins-secreting plasma cells. Secreted immunoglobulins mediate the effector phase of humoral immunity, which results in the elimination of bound antigens. The antigen binding site is formed by the variable domain of one heavy chain, together with that of its associated light chain. Thus, each immunoglobulin has two antigen binding sites with remarkable affinity for a particular antigen. The variable domains are assembled by a process called V-(D)-J rearrangement and can then be subjected to somatic hypermutations which, after exposure to antigen and selection, allow affinity maturation for a particular antigen. The chain is Probable non-functional immunoglobulin heavy variable 7-81 from Homo sapiens (Human).